A 571-amino-acid chain; its full sequence is MSIMLPINNNFSLSQNSFYNTISGTYADYFSAWDKWEKQALPGENRNEAVSLLKECLINQFSELQLNRLNLSSLPDNLPPQITVLEITQNALISLPELPASLEYLDACDNRLSTLPELPASLKHLDVDNNQLTMLPELPALLEYINADNNQLTMLPELPTSLEVLSVRNNQLTFLPELPESLEALDVSTNLLESLPAVPVRNHHSEETEIFFRCRENRITHIPENILSLDPTCTIILEDNPLSSRIRESLSQQTAQPDYHGPRIYFSMSDGQQNTLHRPLADAVTAWFPENKQSDVSQIWHAFEHEEHANTFSAFLDRLSDTVSARNTSGFREQVAAWLEKLSTSAELRQQSFAVAADATESCEDRVALTWNNLRKTLLVHQASEGLFDNDTGALLSLGREMFRLEILEDIARDKVRTLHFVDEIEVYLAFQTMLAEKLQLSTAVKEMRFYGVSGVTANDLRTAEAMVRSREENEFTDWFSLWGPWHAVLKRTEADRWAQAEEQKYEMLENEYSQRVADRLKASGLSGDADAEREAGAQVMRETEQQIYRQVTDEVLALRLSENGSQLHHS.

Residues 1–260 form an interaction with target proteins region; sequence MSIMLPINNN…SQQTAQPDYH (260 aa). 9 LRR repeats span residues 58 to 81, 83 to 99, 100 to 119, 120 to 144, 146 to 159, 160 to 184, 186 to 202, 205 to 229, and 232 to 260; these read INQF…LPPQ, TVLE…PELP, ASLE…PELP, ASLK…LLEY, NADN…PELP, TSLE…SLEA, DVST…PVRN, SEET…ILSL, and TCTI…PDYH. A linker region spans residues 269 to 278; it reads SDGQQNTLHR. In terms of domain architecture, NEL spans 279-571; that stretch reads PLADAVTAWF…SENGSQLHHS (293 aa). An E3 ubiquitin-protein ligase catalytic domain region spans residues 279 to 571; it reads PLADAVTAWF…SENGSQLHHS (293 aa). Cys363 serves as the catalytic Glycyl thioester intermediate.

The protein belongs to the LRR-containing bacterial E3 ligase family. In terms of processing, ubiquitinated in the presence of host E1 ubiquitin-activating enzyme, E2 ubiquitin-conjugating enzyme UBE2D3 and ubiquitin.

It is found in the secreted. The protein localises to the host cytoplasm. It carries out the reaction S-ubiquitinyl-[E2 ubiquitin-conjugating enzyme]-L-cysteine + [acceptor protein]-L-lysine = [E2 ubiquitin-conjugating enzyme]-L-cysteine + N(6)-ubiquitinyl-[acceptor protein]-L-lysine.. Its function is as follows. Effector proteins function to alter host cell physiology and promote bacterial survival in host tissues. This protein is an E3 ubiquitin ligase that interferes with host's ubiquitination pathway. Synthesizes a 'Lys-48'-linked ubiquitin chain, which requires non-covalent binding between ubiquitin and the host ubiquitin-conjugating enzyme UBE2D1. This chain is E3 ubiquitin-protein ligase ipaH3 (ipaH3), found in Shigella flexneri.